Reading from the N-terminus, the 363-residue chain is Sulfate/thiosulfate import ATP-binding protein CysA (363 aa).

An ABC transporter domain is found at 3 to 237; that stretch reads IEINNISKYF…PATRFVLEFL (235 aa). 35–42 is a binding site for ATP; it reads GPSGSGKT.

This sequence belongs to the ABC transporter superfamily. Sulfate/tungstate importer (TC 3.A.1.6) family. The complex is composed of two ATP-binding proteins (CysA), two transmembrane proteins (CysT and CysW) and a solute-binding protein (CysP).

It localises to the cell inner membrane. It carries out the reaction sulfate(out) + ATP + H2O = sulfate(in) + ADP + phosphate + H(+). It catalyses the reaction thiosulfate(out) + ATP + H2O = thiosulfate(in) + ADP + phosphate + H(+). In terms of biological role, part of the ABC transporter complex CysAWTP involved in sulfate/thiosulfate import. Responsible for energy coupling to the transport system. The protein is Sulfate/thiosulfate import ATP-binding protein CysA of Yersinia pseudotuberculosis serotype I (strain IP32953).